A 378-amino-acid chain; its full sequence is Glutamate 5-kinase (378 aa).

ATP is bound at residue K19. The substrate site is built by S59, D146, and N158. Residues 178 to 179 and 220 to 226 contribute to the ATP site; these read TD and TGGMATK. The PUA domain occupies 285 to 363; it reads QGQIQVDAGA…GEIGEILGYK (79 aa).

Belongs to the glutamate 5-kinase family.

Its subcellular location is the cytoplasm. The enzyme catalyses L-glutamate + ATP = L-glutamyl 5-phosphate + ADP. The protein operates within amino-acid biosynthesis; L-proline biosynthesis; L-glutamate 5-semialdehyde from L-glutamate: step 1/2. Its function is as follows. Catalyzes the transfer of a phosphate group to glutamate to form L-glutamate 5-phosphate. This chain is Glutamate 5-kinase, found in Moorella thermoacetica (strain ATCC 39073 / JCM 9320).